A 97-amino-acid chain; its full sequence is Large ribosomal subunit protein eL21 (97 aa).

It belongs to the eukaryotic ribosomal protein eL21 family.

In Methanoculleus marisnigri (strain ATCC 35101 / DSM 1498 / JR1), this protein is Large ribosomal subunit protein eL21.